A 358-amino-acid chain; its full sequence is WD repeat domain phosphoinositide-interacting protein 4 (358 aa).

WD repeat units follow at residues alanine 2–histidine 40 and alanine 188–glutamate 228. Positions leucine 229 to glycine 232 match the L/FRRG motif motif. One copy of the WD 3 repeat lies at threonine 233 to arginine 272.

Belongs to the WD repeat PROPPIN family.

Its subcellular location is the preautophagosomal structure. Component of the autophagy machinery that controls the major intracellular degradation process by which cytoplasmic materials are packaged into autophagosomes and delivered to lysosomes for degradation. Binds phosphatidylinositol 3-phosphate (PtdIns3P). This Danio rerio (Zebrafish) protein is WD repeat domain phosphoinositide-interacting protein 4 (wdr45).